We begin with the raw amino-acid sequence, 695 residues long: Rho-related BTB domain-containing protein 1 (695 aa).

The segment at 1-210 (MDSDMDYERP…DNAIRAALIS (210 aa)) is rho-like. Residues 21–28 (GDNAVGKT), 84–88 (DTFGD), and 140–143 (CQLD) contribute to the GTP site. 2 BTB domains span residues 266–426 (ADVL…DEKE) and 484–551 (SDVT…SPNL). The segment at 325-351 (SLGSAEEGKEGPQRTPQADPGASSGQD) is disordered.

Belongs to the small GTPase superfamily. Rho family. As to expression, highest expression in heart and testis.

This Mus musculus (Mouse) protein is Rho-related BTB domain-containing protein 1 (Rhobtb1).